The following is a 559-amino-acid chain: Serine/threonine-protein kinase bur1 (559 aa).

Residues Y40–F341 enclose the Protein kinase domain. Residues L46 to V54 and K69 contribute to the ATP site. The active-site Proton acceptor is the D171. The span at S359–A372 shows a compositional bias: basic and acidic residues. Residues S359–R559 are disordered. The segment covering G400–G414 has biased composition (gly residues). Composition is skewed to basic and acidic residues over residues D457–P467, Y491–T534, and P543–R559.

This sequence belongs to the protein kinase superfamily. CMGC Ser/Thr protein kinase family. CDC2/CDKX subfamily.

Its subcellular location is the nucleus. The catalysed reaction is L-seryl-[protein] + ATP = O-phospho-L-seryl-[protein] + ADP + H(+). It catalyses the reaction L-threonyl-[protein] + ATP = O-phospho-L-threonyl-[protein] + ADP + H(+). It carries out the reaction [DNA-directed RNA polymerase] + ATP = phospho-[DNA-directed RNA polymerase] + ADP + H(+). Its function is as follows. Serine/threonine-protein kinase involved in transcription regulation. Phosphorylates the mus-8/ubc2 ubiquitin-conjugating enzyme (E2), leading to monoubiquitination of histone H2B and the silencing of telomeric-associated genes. Also required for histone H3 methylation. Necessary for the recovery from pheromone-induced growth arrest in the cell cycle G1 phase. The polypeptide is Serine/threonine-protein kinase bur1 (stk-1) (Neurospora crassa (strain ATCC 24698 / 74-OR23-1A / CBS 708.71 / DSM 1257 / FGSC 987)).